The following is a 508-amino-acid chain: Cytochrome c-552 (508 aa).

A signal peptide spans Met1–Ala23. A heme c-binding site is contributed by His103. Residues Cys131, Cys134, and Lys135 each contribute to the heme site. Heme c is bound by residues Cys169, Cys172, His173, Cys211, Cys214, and His215. 4 residues coordinate Ca(2+): Glu217, Tyr218, Lys274, and Gln276. Tyr218 lines the substrate pocket. His277 serves as a coordination point for substrate. The heme c site is built by His288, Cys295, Cys298, His299, His313, Cys326, Cys329, His330, and His405. The segment at Gly485–Gln508 is disordered. Over residues Gly494–Gln508 the composition is skewed to polar residues.

It belongs to the cytochrome c-552 family. Requires Ca(2+) as cofactor. It depends on heme c as a cofactor.

Its subcellular location is the periplasm. The enzyme catalyses 6 Fe(III)-[cytochrome c] + NH4(+) + 2 H2O = 6 Fe(II)-[cytochrome c] + nitrite + 8 H(+). Its pathway is nitrogen metabolism; nitrate reduction (assimilation). Functionally, catalyzes the reduction of nitrite to ammonia, consuming six electrons in the process. This Desulfotalea psychrophila (strain LSv54 / DSM 12343) protein is Cytochrome c-552.